A 273-amino-acid polypeptide reads, in one-letter code: 5-deoxy-glucuronate isomerase (273 aa).

The protein belongs to the isomerase IolB family.

It carries out the reaction 5-deoxy-D-glucuronate = 5-dehydro-2-deoxy-D-gluconate. It participates in polyol metabolism; myo-inositol degradation into acetyl-CoA; acetyl-CoA from myo-inositol: step 4/7. Functionally, involved in the isomerization of 5-deoxy-glucuronate (5DG) to 5-dehydro-2-deoxy-D-gluconate (DKG or 2-deoxy-5-keto-D-gluconate). The sequence is that of 5-deoxy-glucuronate isomerase from Listeria monocytogenes serovar 1/2a (strain ATCC BAA-679 / EGD-e).